The chain runs to 109 residues: Thioredoxin 2 (109 aa).

Residues 2–109 (SGKYFEATDQ…IAKKLDEHIG (108 aa)) form the Thioredoxin domain. Residues Cys-33 and Cys-36 are joined by a disulfide bond.

Belongs to the thioredoxin family.

Participates in various redox reactions through the reversible oxidation of its active center dithiol to a disulfide and catalyzes dithiol-disulfide exchange reactions. The chain is Thioredoxin 2 (trx2) from Chlorobaculum tepidum (strain ATCC 49652 / DSM 12025 / NBRC 103806 / TLS) (Chlorobium tepidum).